The following is a 573-amino-acid chain: Probable zinc metallopeptidase EGY3, chloroplastic (573 aa).

A chloroplast-targeting transit peptide spans 1-50; sequence MASLFVSTPSSSLTLKSCHSLHLRRFDRAEFSNFGKASVNQTTRSRHSLR. Residues 38 to 105 form a disordered region; the sequence is SVNQTTRSRH…EKKSKQQEMD (68 aa). 2 stretches are compositionally biased toward basic and acidic residues: residues 52–62 and 96–105; these read SAEDDRVREPV and EKKSKQQEMD. Positions 122 to 185 form a coiled coil; that stretch reads EAAIKLEKTR…KALDLNKLKS (64 aa). The next 7 membrane-spanning stretches (helical) occupy residues 274-294, 305-325, 376-396, 414-434, 441-461, 493-513, and 536-556; these read VSAI…SGFF, IANV…SEIA, ASAY…DGSF, PLLS…GNVL, VGVP…VTSL, LLLG…GLFA, and FAWG…NSGG.

Belongs to the peptidase M50B family.

Its subcellular location is the plastid. It localises to the chloroplast membrane. Functionally, probable membrane-associated metalloprotease that may be involved in chloroplast development. The polypeptide is Probable zinc metallopeptidase EGY3, chloroplastic (EGY3) (Arabidopsis thaliana (Mouse-ear cress)).